A 903-amino-acid chain; its full sequence is MVCVTDQNNETTSQNRADKLPKSWDPKAVEADLYQGWVDAGYFTADPASDKPGFSIVLPPPNVTGQLHMGHALDHTLMDALARRKRMQGFEVLWLPGMDHAGIATQTKVEEMLKETEGKTRYDYDREEFIAKVWEWKQEYGGKIGEQMRAIGDSVDWSRERFTLDDGLSRAVQTIFKKLFDAGLIYQANRLVNWSPVLETAVSDIEVIYKDVEGELVSIRYGSLNDDEPHVIVATTRVETMLGDVAVAVHPDDERYKDLVGQTLPHPFRDDLSLKVVADDYVDPEFGSGAVKITPAHDPNDYALGLRHNLDMPTIMDKTGRIADTGTQFDGLTREEARIKVREELAAQGRIVKEIRPYVHSVGHSERSGEAIEPRLSLQWFVKVEELAKMSGDAVREGDTTIHPKSLEPRYFDWVDNMHDWTISRQLWWGHRIPIWYGPNDEIICVGPDEQAPEGYVQDPDVLDTWFSSALWPFSTMGWPEKTPELEKFYPTSVLVTAYDILFFWVARMMMFGTFAAKETPELLGEGKDGRPQVPFTDLFLHGLVRDEHGRKMSKSLGNGIDPMDWVENYGADALRFTLARGANPGVDLPVGEDSAQSSRNFATKLFNATKFALMNGAVSEGLPAREELTDADRWIVDLLEQVRLDVDAYLDNYQFAKANEELYHFAWNEFCDWYLEIAKVQIPREGTSAQGENTQKVLGHVLDALLRLLHPAMPFVTEVLWQALTDRTSIVVASWPTAADTNGGVAVDADAARRIGDVEKLVTEVRRFRADQGVKPSQKVPARLDFVACDLQDLEDSVRSLVRIEQPEDDFAASASLEIRLSQATITVELDTSGTVDVAAERKRLEKDLANAQKELETTAKKLGNEAFLSKAPDAVVDKIRGRAQIAQEEVERINKRLEELA.

Residues 1 to 15 (MVCVTDQNNETTSQN) are compositionally biased toward polar residues. The interval 1–21 (MVCVTDQNNETTSQNRADKLP) is disordered. The 'HIGH' region signature appears at 61 to 71 (PNVTGQLHMGH). A 'KMSKS' region motif is present at residues 552–556 (KMSKS). Residue K555 coordinates ATP. Residues 836-903 (TVDVAAERKR…RINKRLEELA (68 aa)) adopt a coiled-coil conformation.

This sequence belongs to the class-I aminoacyl-tRNA synthetase family. ValS type 1 subfamily. Monomer.

It localises to the cytoplasm. The enzyme catalyses tRNA(Val) + L-valine + ATP = L-valyl-tRNA(Val) + AMP + diphosphate. Its function is as follows. Catalyzes the attachment of valine to tRNA(Val). As ValRS can inadvertently accommodate and process structurally similar amino acids such as threonine, to avoid such errors, it has a 'posttransfer' editing activity that hydrolyzes mischarged Thr-tRNA(Val) in a tRNA-dependent manner. The chain is Valine--tRNA ligase from Corynebacterium glutamicum (strain ATCC 13032 / DSM 20300 / JCM 1318 / BCRC 11384 / CCUG 27702 / LMG 3730 / NBRC 12168 / NCIMB 10025 / NRRL B-2784 / 534).